A 1171-amino-acid polypeptide reads, in one-letter code: WD repeat-containing protein on Y chromosome (1171 aa).

WD repeat units lie at residues 157–201, 331–370, 374–413, 464–503, 516–555, 603–643, 748–787, and 831–870; these read EIPE…LRSA, RIPL…EPSA, GHNG…LLQT, THAA…RKII, IIDI…VVRN, FHTD…RRYN, KVGD…IPQA, and GHLK…LGTL. Positions 1076 to 1171 are disordered; sequence RTSFTLSDYT…TNTMKSSNSH (96 aa). 2 stretches are compositionally biased toward polar residues: residues 1094–1106 and 1161–1171; these read SSRN…SSGS and KTNTMKSSNSH.

This Drosophila grimshawi (Hawaiian fruit fly) protein is WD repeat-containing protein on Y chromosome.